We begin with the raw amino-acid sequence, 505 residues long: Deoxyguanosinetriphosphate triphosphohydrolase (505 aa).

The HD domain occupies 66–273; it reads RLTHSMEVQQ…MEAADDISYC (208 aa).

The protein belongs to the dGTPase family. Type 1 subfamily. As to quaternary structure, homotetramer. It depends on Mg(2+) as a cofactor.

The enzyme catalyses dGTP + H2O = 2'-deoxyguanosine + triphosphate + H(+). In terms of biological role, dGTPase preferentially hydrolyzes dGTP over the other canonical NTPs. This chain is Deoxyguanosinetriphosphate triphosphohydrolase, found in Shigella flexneri.